A 273-amino-acid polypeptide reads, in one-letter code: Large ribosomal subunit protein uL2 (273 aa).

A disordered region spans residues Arg221–Lys273. Positions Lys253–Lys273 are enriched in basic residues.

This sequence belongs to the universal ribosomal protein uL2 family. Part of the 50S ribosomal subunit. Forms a bridge to the 30S subunit in the 70S ribosome.

One of the primary rRNA binding proteins. Required for association of the 30S and 50S subunits to form the 70S ribosome, for tRNA binding and peptide bond formation. It has been suggested to have peptidyltransferase activity; this is somewhat controversial. Makes several contacts with the 16S rRNA in the 70S ribosome. The chain is Large ribosomal subunit protein uL2 from Glaesserella parasuis serovar 5 (strain SH0165) (Haemophilus parasuis).